A 705-amino-acid chain; its full sequence is Calpastatin (705 aa).

2 disordered regions span residues Met-1–Ala-211 and Leu-226–Pro-493. Composition is skewed to basic and acidic residues over residues Lys-7–Pro-17 and Val-24–Val-62. Lys-10 participates in a covalent cross-link: Glycyl lysine isopeptide (Lys-Gly) (interchain with G-Cter in SUMO2). Lys-28 bears the N6-acetyllysine mark. 2 stretches are compositionally biased toward low complexity: residues Ser-63–Glu-72 and Pro-94–Glu-103. At Ser-65 the chain carries Phosphoserine. Phosphothreonine is present on Thr-115. Acidic residues predominate over residues Thr-135–Lys-151. The Inhibitory domain 1 repeat unit spans residues Glu-149 to Ser-202. Over residues Glu-173 to Gly-194 the composition is skewed to basic and acidic residues. Phosphoserine is present on residues Ser-202 and Ser-230. The span at Asp-234–Leu-248 shows a compositional bias: basic and acidic residues. Polar residues predominate over residues Thr-275–Leu-286. Composition is skewed to basic and acidic residues over residues Arg-289–Gly-317 and Tyr-327–Ser-352. The stretch at Glu-292 to Ala-344 is one Inhibitory domain 2 repeat. 3 positions are modified to phosphoserine: Ser-352, Ser-354, and Ser-361. Acidic residues predominate over residues Glu-355–Phe-364. Over residues Asp-365–Glu-381 the composition is skewed to basic and acidic residues. Position 428 is a phosphoserine (Ser-428). Over residues Pro-430 to Glu-489 the composition is skewed to basic and acidic residues. An Inhibitory domain 3 repeat occupies Ala-434 to Val-487. Phosphoserine occurs at positions 504 and 515. The interval Val-527–Ser-705 is disordered. The span at Gln-533–Ala-542 shows a compositional bias: low complexity. At Ser-563 the chain carries Phosphoserine. Residues Pro-571–Gln-624 form an Inhibitory domain 4 repeat. Residues Pro-571 to Arg-625 show a composition bias toward basic and acidic residues. Positions Asp-651–Asp-662 are enriched in low complexity. The segment covering Lys-683–Ser-705 has biased composition (basic and acidic residues).

Belongs to the protease inhibitor I27 (calpastatin) family.

In terms of biological role, specific inhibition of calpain (calcium-dependent cysteine protease). Plays a key role in postmortem tenderization of meat and have been proposed to be involved in muscle protein degradation in living tissue. This is Calpastatin (CAST) from Bos taurus (Bovine).